Reading from the N-terminus, the 354-residue chain is uncharacterized protein (354 aa).

Disordered regions lie at residues 1–74 (MGTK…ENCR) and 87–115 (SESG…QRAS). At K19 the chain carries N6-acetyllysine. Residues 32-41 (EGPSSNSSFH) show a composition bias toward low complexity. The span at 45–54 (EEGTDLEGDM) shows a compositional bias: acidic residues. S115 and S174 each carry phosphoserine. Residues 182–199 (QGSSQDLPMQANLSQSNE) are compositionally biased toward polar residues. 2 disordered regions span residues 182-208 (QGSS…GRDR) and 235-298 (QVAD…DELS). Y291 bears the Phosphotyrosine mark. The residue at position 292 (S292) is a Phosphoserine.

This is an uncharacterized protein from Mus musculus (Mouse).